Here is a 657-residue protein sequence, read N- to C-terminus: MTQLAIGKPAPLGAHYDGQGVNFTLFSAHAERVELCVFDANGQEHRYDLPGHSGDIWHGYLPDARPGLRYGYRVHGPWQPAEGHRFNPAKLLIDPCARQIDGEFKDNPLLHAGHNEPDYRDNAAIAPKCVVVVDHYDWEDDAPPRTPWGSTIIYEAHVKGLTYLHPEIPVEIRGTYKALGHPVMINYLKQLGITALELLPVAQFASEPRLQRMGLSNYWGYNPVAMFALHPAYACSPETALHEFRDAIKALHKAGIEVILDIVLNHSAELDLDGPLFSLRGIDNRSYYWIREDGDYHNWTGCGNTLNLSHPAVVDYASACLRYWVETCHVDGFRFDLAAVMGRTPEFRQDAPLFTAIQNCPVLSQVKLIAEPWDIAPGGYQVGNFPPLFAEWNDHFRDAARRFWLHYDLPLGAFAGRFAASSDVFKRNGRLPSAAINLVTAHDGFTLRDCVCFNHKHNEANGEENRDGTNNNYSNNHGKEGVGGTLDLVERRRDSIHALLTTLLLSQGTPMLLAGDEHGHSQHGNNNAYCQDNQLTWLDWSQASSGLTAFTAALIHLRKRIPALVENRWWEEGDGNVRWLNRYAQPLSTDEWQNGPKQLQILLSDRFLIAINATLEVTEIVLPAGEWHAIPPFAGEDNPVITAVWQGPAHGLCVFQR.

Residue D336 is the Nucleophile of the active site. The active-site Proton donor is the E371. A disordered region spans residues 460 to 481 (ANGEENRDGTNNNYSNNHGKEG).

The protein belongs to the glycosyl hydrolase 13 family.

It carries out the reaction Hydrolysis of (1-&gt;6)-alpha-D-glucosidic linkages to branches with degrees of polymerization of three or four glucose residues in limit dextrin.. It functions in the pathway glycan degradation; glycogen degradation. Functionally, removes maltotriose and maltotetraose chains that are attached by 1,6-alpha-linkage to the limit dextrin main chain, generating a debranched limit dextrin. The protein is Glycogen debranching enzyme of Escherichia coli O157:H7.